A 142-amino-acid polypeptide reads, in one-letter code: Thioredoxin-like protein YLS8 (142 aa).

Belongs to the DIM1 family. As to expression, expressed in roots, leaves, stems, cauline leaves and flowers.

This is Thioredoxin-like protein YLS8 (YLS8) from Arabidopsis thaliana (Mouse-ear cress).